The primary structure comprises 280 residues: Shikimate dehydrogenase (NADP(+)) (280 aa).

Shikimate-binding positions include 18 to 20 and Thr-65; that span reads SRS. Lys-69 (proton acceptor) is an active-site residue. Shikimate is bound by residues Asn-90 and Asp-105. NADP(+)-binding positions include 130–134, 154–159, and Leu-219; these read GAGGA and NRTLAR. Tyr-221 is a shikimate binding site. Gly-242 serves as a coordination point for NADP(+).

Belongs to the shikimate dehydrogenase family. As to quaternary structure, homodimer.

It catalyses the reaction shikimate + NADP(+) = 3-dehydroshikimate + NADPH + H(+). Its pathway is metabolic intermediate biosynthesis; chorismate biosynthesis; chorismate from D-erythrose 4-phosphate and phosphoenolpyruvate: step 4/7. In terms of biological role, involved in the biosynthesis of the chorismate, which leads to the biosynthesis of aromatic amino acids. Catalyzes the reversible NADPH linked reduction of 3-dehydroshikimate (DHSA) to yield shikimate (SA). This Mesorhizobium japonicum (strain LMG 29417 / CECT 9101 / MAFF 303099) (Mesorhizobium loti (strain MAFF 303099)) protein is Shikimate dehydrogenase (NADP(+)).